Here is a 644-residue protein sequence, read N- to C-terminus: Exoribonuclease 2 (644 aa).

One can recognise an RNB domain in the interval 189–516; that stretch reads RQDLTALNFV…NHRLLKAVIK (328 aa). The S1 motif domain maps to 561 to 643; it reads NTRFAAEIID…ETRSIIARPA (83 aa).

It belongs to the RNR ribonuclease family. RNase II subfamily.

The protein localises to the cytoplasm. The catalysed reaction is Exonucleolytic cleavage in the 3'- to 5'-direction to yield nucleoside 5'-phosphates.. In terms of biological role, involved in mRNA degradation. Hydrolyzes single-stranded polyribonucleotides processively in the 3' to 5' direction. The chain is Exoribonuclease 2 from Salmonella typhi.